Here is a 105-residue protein sequence, read N- to C-terminus: Large ribosomal subunit protein uL24 (105 aa).

This sequence belongs to the universal ribosomal protein uL24 family. In terms of assembly, part of the 50S ribosomal subunit.

One of two assembly initiator proteins, it binds directly to the 5'-end of the 23S rRNA, where it nucleates assembly of the 50S subunit. Its function is as follows. One of the proteins that surrounds the polypeptide exit tunnel on the outside of the subunit. In Staphylococcus carnosus (strain TM300), this protein is Large ribosomal subunit protein uL24.